Here is a 357-residue protein sequence, read N- to C-terminus: Homoserine O-succinyltransferase (357 aa).

C146 functions as the Acyl-thioester intermediate in the catalytic mechanism. Residues K167 and S196 each contribute to the substrate site. H239 functions as the Proton acceptor in the catalytic mechanism. E241 is a catalytic residue. A substrate-binding site is contributed by R253.

Belongs to the MetA family.

Its subcellular location is the cytoplasm. The catalysed reaction is L-homoserine + succinyl-CoA = O-succinyl-L-homoserine + CoA. Its pathway is amino-acid biosynthesis; L-methionine biosynthesis via de novo pathway; O-succinyl-L-homoserine from L-homoserine: step 1/1. Transfers a succinyl group from succinyl-CoA to L-homoserine, forming succinyl-L-homoserine. This chain is Homoserine O-succinyltransferase, found in Allochromatium vinosum (strain ATCC 17899 / DSM 180 / NBRC 103801 / NCIMB 10441 / D) (Chromatium vinosum).